Reading from the N-terminus, the 510-residue chain is MTHPDISVDVLVIGAGPTGLGAAKRLNQIDGPSWMIVDSNETPGGLASTDVTPEGFLYDVGGHVIFSHYKYFDDCLDEALPKEDDWYTHQRISYVRCQGQWVPYPFQNNISMLPKEEQVKCIDGMIDAALEARVANTKPKTFDEWIVRMMGTGIADLFMRPYNFKVWAVPTTKMQCAWLGERVAAPNLKAVTTNVILGKTAGNWGPNATFRFPARGGTGGIWIAVANTLPKEKTRFGEKGKVTKVNANNKTVTLQDGTTIGYKKLVSTMAVDFLAEAMNDQELVGLTKQLFYSSTHVIGVGVRGSRPERIGDKCWLYFPEDNCPFYRATIFSNYSPYNQPEASKKLPTMQLADGSRPQSTEAKEGPYWSIMLEVSESSMKPVNQETILADCIQGLVNTEMLKPTDEIVSTYHRRFDHGYPTPTLEREGALTQILPKLQDKDIWSRGRFGSWRYEVGNQDHSFMLGVEAVDNIVNGAVELTLNYPDFVNGRQNTERRLVDGAQVFAKSKAQ.

FAD-binding residues include Thr18, Asp38, Leu46, and Gly61. UDP-alpha-D-galactose is bound by residues Gly61 and Gly62. His63 contributes to the FAD binding site. NADH is bound by residues His68, Arg91, and Ser93. Residues His68, Arg91, Ser93, and Tyr104 each contribute to the NADPH site. UDP-alpha-D-galactose-binding residues include Tyr104, Gln107, Met159, Tyr162, Asn163, Trp167, and Arg182. Asn203 lines the NADPH pocket. Asn207 is a binding site for UDP-alpha-D-galactose. Val242 contributes to the FAD binding site. NADPH-binding residues include Trp315 and Tyr317. Positions 317, 327, and 419 each coordinate UDP-alpha-D-galactose. Arg327 is a binding site for FAD. NADH contacts are provided by Tyr419 and Arg447. Positions 419 and 447 each coordinate NADPH. Residue Arg447 participates in FAD binding. Tyr453 serves as a coordination point for UDP-alpha-D-galactose. Positions 456, 457, and 458 each coordinate FAD. Asn457 contributes to the UDP-alpha-D-galactose binding site. Asn457 contributes to the NADH binding site. Asn457 contacts NADPH. His460 serves as a coordination point for NADPH. Ser461 lines the FAD pocket.

It belongs to the UDP-galactopyranose/dTDP-fucopyranose mutase family. In terms of assembly, homotetramer. FAD serves as cofactor.

It carries out the reaction UDP-alpha-D-galactose = UDP-alpha-D-galactofuranose. Its function is as follows. UDP-galactopyranose mutase, key flavoenzyme of galactofuranose metabolism that catalyzes the 6-to-5 ring contraction of UDP-galactopyranose to UDP-galactofuranose, the donor used by various galacto-furanosyltransferases. Controls the biosynthesis of galactomannan and galactofuranose containing glycoconjugates. The flavin functions as nucleophile, forming a flavin-sugar adduct that facilitates galactose-ring opening and contraction. The binding of UDP-galactopyranose induces profound conformational changes in the enzyme and two loops on opposite sides of the active site move toward each other by over 10 Angstroms to cover the substrate and create a closed active site. In Aspergillus fumigatus (Neosartorya fumigata), this protein is UDP-galactopyranose mutase.